A 267-amino-acid chain; its full sequence is Translation initiation factor 2 subunit alpha (267 aa).

In terms of domain architecture, S1 motif spans 12 to 83 (GEYVIATVKE…RRKTVDVSLK (72 aa)).

The protein belongs to the eIF-2-alpha family. As to quaternary structure, heterotrimer composed of an alpha, a beta and a gamma chain.

In terms of biological role, eIF-2 functions in the early steps of protein synthesis by forming a ternary complex with GTP and initiator tRNA. This chain is Translation initiation factor 2 subunit alpha, found in Staphylothermus marinus (strain ATCC 43588 / DSM 3639 / JCM 9404 / F1).